Reading from the N-terminus, the 258-residue chain is Hydroxyacylglutathione hydrolase (258 aa).

Zn(2+) is bound by residues histidine 56, histidine 58, aspartate 60, histidine 61, histidine 112, aspartate 132, and histidine 170.

This sequence belongs to the metallo-beta-lactamase superfamily. Glyoxalase II family. As to quaternary structure, monomer. The cofactor is Zn(2+).

The catalysed reaction is an S-(2-hydroxyacyl)glutathione + H2O = a 2-hydroxy carboxylate + glutathione + H(+). It participates in secondary metabolite metabolism; methylglyoxal degradation; (R)-lactate from methylglyoxal: step 2/2. Thiolesterase that catalyzes the hydrolysis of S-D-lactoyl-glutathione to form glutathione and D-lactic acid. The protein is Hydroxyacylglutathione hydrolase of Pseudomonas paraeruginosa (strain DSM 24068 / PA7) (Pseudomonas aeruginosa (strain PA7)).